Reading from the N-terminus, the 83-residue chain is UPF0270 protein CGSHiEE_07180 (83 aa).

It belongs to the UPF0270 family.

The polypeptide is UPF0270 protein CGSHiEE_07180 (Haemophilus influenzae (strain PittEE)).